The sequence spans 267 residues: Glutamate 5-kinase (267 aa).

Residue lysine 15 coordinates ATP. Serine 55, aspartate 142, and asparagine 158 together coordinate substrate. ATP-binding positions include 178 to 179 and 220 to 226; these read SD and TGGMATK.

It belongs to the glutamate 5-kinase family.

The protein resides in the cytoplasm. It carries out the reaction L-glutamate + ATP = L-glutamyl 5-phosphate + ADP. Its pathway is amino-acid biosynthesis; L-proline biosynthesis; L-glutamate 5-semialdehyde from L-glutamate: step 1/2. Functionally, catalyzes the transfer of a phosphate group to glutamate to form L-glutamate 5-phosphate. The protein is Glutamate 5-kinase of Ligilactobacillus salivarius (strain UCC118) (Lactobacillus salivarius).